A 98-amino-acid chain; its full sequence is Acylphosphatase-1 (98 aa).

Residues 8 to 98 (SVDYEVFGKV…LEHSTFSICK (91 aa)) enclose the Acylphosphatase-like domain. Catalysis depends on residues arginine 23 and asparagine 41.

It belongs to the acylphosphatase family.

It carries out the reaction an acyl phosphate + H2O = a carboxylate + phosphate + H(+). The chain is Acylphosphatase-1 (acyp1) from Xenopus tropicalis (Western clawed frog).